The sequence spans 322 residues: Endochitinase CH25 (322 aa).

The N-terminal stretch at 1-20 (MKSCLLLFLIFSFLLSFSLA) is a signal peptide. Residues 21 to 62 (EQCGRQAGGALCPNGLCCSEFGWCGDTEAYCKQPGCQSQCGG) enclose the Chitin-binding type-1 domain. 7 disulfide bridges follow: cysteine 23–cysteine 38, cysteine 32–cysteine 44, cysteine 37–cysteine 51, cysteine 56–cysteine 60, cysteine 92–cysteine 154, cysteine 166–cysteine 174, and cysteine 273–cysteine 305. Glutamate 136 serves as the catalytic Proton donor.

This sequence belongs to the glycosyl hydrolase 19 family. Chitinase class I subfamily. High expression in roots, moderate in floral tissues and low in stems and leaves.

It catalyses the reaction Random endo-hydrolysis of N-acetyl-beta-D-glucosaminide (1-&gt;4)-beta-linkages in chitin and chitodextrins.. This Brassica napus (Rape) protein is Endochitinase CH25.